The chain runs to 317 residues: L-lactate dehydrogenase (317 aa).

Residues valine 17, aspartate 38, lysine 43, tyrosine 69, and 83 to 84 (GA) contribute to the NAD(+) site. Substrate contacts are provided by glutamine 86 and arginine 92. NAD(+) is bound by residues serine 105, 122–124 (ATN), and serine 147. Substrate is bound at residue 124–127 (NPVD). 152–155 (DTAR) is a binding site for substrate. Residues arginine 157 and histidine 172 each contribute to the beta-D-fructose 1,6-bisphosphate site. Histidine 179 functions as the Proton acceptor in the catalytic mechanism. Tyrosine 224 is subject to Phosphotyrosine. Residue threonine 233 coordinates substrate.

This sequence belongs to the LDH/MDH superfamily. LDH family. Homotetramer.

The protein resides in the cytoplasm. The enzyme catalyses (S)-lactate + NAD(+) = pyruvate + NADH + H(+). It functions in the pathway fermentation; pyruvate fermentation to lactate; (S)-lactate from pyruvate: step 1/1. Allosterically activated by fructose 1,6-bisphosphate (FBP). Functionally, catalyzes the conversion of lactate to pyruvate. The polypeptide is L-lactate dehydrogenase (Geobacillus kaustophilus (strain HTA426)).